Reading from the N-terminus, the 61-residue chain is Protein MATERNALLY EXPRESSED GENE 6 (61 aa).

A disulfide bridge links C38 with C60.

The protein belongs to the MEG family. In terms of tissue distribution, ubiquitous.

The protein is Protein MATERNALLY EXPRESSED GENE 6 (MEG6) of Zea mays (Maize).